A 396-amino-acid polypeptide reads, in one-letter code: MAKSKFERVKPHVNVGTIGHVDHGKTTLTAAITTILTKKFGGEAKSYDQIDSAPEERARGITINTSHVEYETDKRHYAHVDCPGHADYVKNMITGAAQMDGAILVVSAADGPMPQTREHILLARQVGVPYIIVFMNKADMVDDAELLELVEMEIRELLSNYDFPGDDTPIIIGSALKALEGDKSDIGEAAILKLAEALDSYIPEPERAIDGAFIMPVEDVFSISGRGTVVTGRVERGIVKVGDEIEIVGLKPTIKTVCTGVEMFRKLLDQGQAGDNVGILLRGTKREEVERGQVLAKPGSILPHTKFTAEIYVLSKEEGGRHTPFFAGYRPQFYFRTTDVTGSIELPAGVEMVMPGDNISVTVNLIAPIAMDEGLRFAIREGGRTVGAGVVAKVIE.

The tr-type G domain occupies 10-206 (KPHVNVGTIG…ALDSYIPEPE (197 aa)). A G1 region spans residues 19–26 (GHVDHGKT). 19–26 (GHVDHGKT) contacts GTP. Thr26 contributes to the Mg(2+) binding site. Residues 60–64 (GITIN) are G2. Residues 81–84 (DCPG) form a G3 region. GTP contacts are provided by residues 81 to 85 (DCPGH) and 136 to 139 (NKAD). The tract at residues 136–139 (NKAD) is G4. The interval 174 to 176 (SAL) is G5.

The protein belongs to the TRAFAC class translation factor GTPase superfamily. Classic translation factor GTPase family. EF-Tu/EF-1A subfamily. Monomer.

Its subcellular location is the cytoplasm. It carries out the reaction GTP + H2O = GDP + phosphate + H(+). GTP hydrolase that promotes the GTP-dependent binding of aminoacyl-tRNA to the A-site of ribosomes during protein biosynthesis. This is Elongation factor Tu from Nitrosomonas europaea (strain ATCC 19718 / CIP 103999 / KCTC 2705 / NBRC 14298).